A 238-amino-acid polypeptide reads, in one-letter code: 1-(5-phosphoribosyl)-5-[(5-phosphoribosylamino)methylideneamino] imidazole-4-carboxamide isomerase (238 aa).

Catalysis depends on Asp8, which acts as the Proton acceptor. The active-site Proton donor is the Asp130.

Belongs to the HisA/HisF family.

It localises to the cytoplasm. The enzyme catalyses 1-(5-phospho-beta-D-ribosyl)-5-[(5-phospho-beta-D-ribosylamino)methylideneamino]imidazole-4-carboxamide = 5-[(5-phospho-1-deoxy-D-ribulos-1-ylimino)methylamino]-1-(5-phospho-beta-D-ribosyl)imidazole-4-carboxamide. Its pathway is amino-acid biosynthesis; L-histidine biosynthesis; L-histidine from 5-phospho-alpha-D-ribose 1-diphosphate: step 4/9. The polypeptide is 1-(5-phosphoribosyl)-5-[(5-phosphoribosylamino)methylideneamino] imidazole-4-carboxamide isomerase (Methanococcus maripaludis (strain C7 / ATCC BAA-1331)).